Consider the following 262-residue polypeptide: Putative phosphatase HI_0003 (262 aa).

D9 (nucleophile) is an active-site residue. Mg(2+) contacts are provided by D9 and N11. Phosphate is bound by residues 43-44 (SA) and K189. D212 is a Mg(2+) binding site. N215 contributes to the phosphate binding site.

The protein belongs to the HAD-like hydrolase superfamily. Cof family. Requires Mg(2+) as cofactor.

The chain is Putative phosphatase HI_0003 from Haemophilus influenzae (strain ATCC 51907 / DSM 11121 / KW20 / Rd).